The following is a 68-amino-acid chain: DNA gyrase inhibitor YacG (68 aa).

The Zn(2+) site is built by Cys12, Cys15, Cys30, and Cys34. Positions 48-68 (KLKTQDAPTSGKGQHSDDYED) are disordered.

The protein belongs to the DNA gyrase inhibitor YacG family. As to quaternary structure, interacts with GyrB. It depends on Zn(2+) as a cofactor.

Its function is as follows. Inhibits all the catalytic activities of DNA gyrase by preventing its interaction with DNA. Acts by binding directly to the C-terminal domain of GyrB, which probably disrupts DNA binding by the gyrase. The protein is DNA gyrase inhibitor YacG of Acinetobacter baylyi (strain ATCC 33305 / BD413 / ADP1).